The following is a 312-amino-acid chain: Zinc import ATP-binding protein ZnuC (312 aa).

The ABC transporter domain maps to 13–228 (VSLEDVGVLR…PEYVRLFGSR (216 aa)). Position 45–52 (45–52 (GPNGSGKS)) interacts with ATP. A disordered region spans residues 241–312 (DHTHLPDGRV…HSRSGEGRHA (72 aa)). Basic and acidic residues predominate over residues 243 to 312 (THLPDGRVLH…HSRSGEGRHA (70 aa)).

This sequence belongs to the ABC transporter superfamily. Zinc importer (TC 3.A.1.15.5) family. As to quaternary structure, the complex is composed of two ATP-binding proteins (ZnuC), two transmembrane proteins (ZnuB) and a solute-binding protein (ZnuA).

Its subcellular location is the cell inner membrane. The catalysed reaction is Zn(2+)(out) + ATP(in) + H2O(in) = Zn(2+)(in) + ADP(in) + phosphate(in) + H(+)(in). Functionally, part of the ABC transporter complex ZnuABC involved in zinc import. Responsible for energy coupling to the transport system. This chain is Zinc import ATP-binding protein ZnuC, found in Rhizobium etli (strain ATCC 51251 / DSM 11541 / JCM 21823 / NBRC 15573 / CFN 42).